A 1582-amino-acid chain; its full sequence is Dynein axonemal assembly factor 1 homolog (1582 aa).

LRR repeat units lie at residues 38–60, 61–82, 83–104, 105–126, 129–150, and 154–175; these read RLND…DEYT, ELKS…TKLT, KLKC…EFNR, ELDT…GTDI, VLNT…AALV, and TLSV…KIFE. The LRRCT domain occupies 189-227; it reads PVVSRLPQYRKTLILACKELTYLDSRPVFPRDRACAEAW. Disordered regions lie at residues 245–420, 560–587, 859–878, 913–942, 1073–1092, 1101–1137, 1150–1218, 1305–1345, 1358–1438, 1484–1517, and 1529–1548; these read AERR…SEMD, SSDV…VKSQ, FSKD…EDRR, DTGE…DDDA, SSNE…LVER, MQRM…MGEG, TEII…QAEG, KDNE…TAKD, LDPE…PYQT, EDSK…NPKN, and PSES…STEQ. A compositionally biased stretch (low complexity) spans 313 to 327; the sequence is ESQASEHSTTSSTSA. Residues 339 to 392 are compositionally biased toward basic and acidic residues; sequence HIAERISNRRVKPLEGRPKVLYDEAASGDEKAVTTTDSKKDSNAEDLPELKDIT. Residues 409–420 are compositionally biased toward polar residues; the sequence is TLLQSDSGSEMD. The segment covering 572 to 582 has biased composition (acidic residues); that stretch reads ESDEEPTEEEM. The segment covering 928–942 has biased composition (acidic residues); the sequence is SDSESEKEVEEDDDA. Basic and acidic residues-rich tracts occupy residues 1078 to 1092 and 1103 to 1125; these read LEAK…LVER and RMKE…KEEE. Over residues 1166–1178 the composition is skewed to low complexity; that stretch reads EGGAQQEEGGAQS. Basic and acidic residues-rich tracts occupy residues 1321 to 1335, 1398 to 1427, and 1484 to 1514; these read PKEE…ETET, SALK…KDTE, and EDSK…RPEN. Residues 1529-1540 show a composition bias toward acidic residues; that stretch reads PSESLEDTEATE.

It belongs to the DNAAF1 family.

The protein localises to the cell projection. It is found in the cilium. Its function is as follows. Cilium-specific protein required for cilia structures. The sequence is that of Dynein axonemal assembly factor 1 homolog (dtr) from Drosophila pseudoobscura pseudoobscura (Fruit fly).